Here is a 209-residue protein sequence, read N- to C-terminus: 60S ribosomal subunit assembly/export protein loc-1 (209 aa).

Disordered regions lie at residues 1-53 (MAPT…SKGR) and 135-209 (REAR…AAPE). Basic and acidic residues-rich tracts occupy residues 20–33 (GSKDAERSRNDGVL) and 135–159 (REARRAEAEKKEAERKARLEETKDS). Positions 126-170 (IKARQMEEIREARRAEAEKKEAERKARLEETKDSLRKKRKRSKQS) form a coiled coil.

This sequence belongs to the LOC1 family. As to quaternary structure, component of the 66S pre-ribosomal particle.

The protein localises to the nucleus. It is found in the nucleolus. In terms of biological role, required for efficient assembly and nuclear export of the 60S ribosomal subunit. This Neurospora crassa (strain ATCC 24698 / 74-OR23-1A / CBS 708.71 / DSM 1257 / FGSC 987) protein is 60S ribosomal subunit assembly/export protein loc-1 (loc-1).